Reading from the N-terminus, the 191-residue chain is Guanylate kinase (191 aa).

In terms of domain architecture, Guanylate kinase-like spans 9 to 187 (GQLIVITGPS…SLIALETAIF (179 aa)). Residue 16 to 23 (GPSGVGKG) participates in ATP binding.

Belongs to the guanylate kinase family.

The protein resides in the cytoplasm. It catalyses the reaction GMP + ATP = GDP + ADP. Its function is as follows. Essential for recycling GMP and indirectly, cGMP. In Thermosynechococcus vestitus (strain NIES-2133 / IAM M-273 / BP-1), this protein is Guanylate kinase.